A 542-amino-acid chain; its full sequence is Chitinase 1 (542 aa).

One can recognise a GH18 domain in the interval 68–506 (FNVLCYFTDW…NAAHEGLKRR (439 aa)). Chitin contacts are provided by residues 186–187 (QE) and 213–216 (GGWS). The Proton donor role is filled by Glu256. Chitin contacts are provided by residues Tyr257, 323-326 (MTYD), and Trp486.

It belongs to the glycosyl hydrolase 18 family. Semipurified toxin complex consists of at least YenA1-YenA2-YenB-YenC1-YenC2-Chi1-Chi2. The Yen-TC:K9 subcomplex is about 26 nm tall and 22 nm in diameter with 5-fold symmetry and 5 copies of YenA1, YenA2, Chi1 and Chi2; the chitinase subunits may be solvent accessible on the exterior the complex. The Yen-TC:K9 subcomplex has no insecticidal activity. The native complex with additional YenB, YenC1 and YenC2 subunits is 16 nm taller and is insecticidal; the toxicity-conferring subunits are present at about 1 copy each.

It is found in the secreted. It carries out the reaction Random endo-hydrolysis of N-acetyl-beta-D-glucosaminide (1-&gt;4)-beta-linkages in chitin and chitodextrins.. Toxin complex is secreted when grown at 25 degrees Celsius or less; at higher temperatures the proteins are present intracellularly but not secreted. Its function is as follows. Part of an orally active toxin complex (TC) with strong insecticidal effects on larvae of the Coleoptera Costelytra zealandica, Acrossidius tasmania and Adoryphorus couloni and some Lepidoptera larvae. The TC has an endochitinase activity. This subunit might aid infection by degradation of the larval peritrophic membrane. The polypeptide is Chitinase 1 (Yersinia entomophaga).